The following is a 610-amino-acid chain: Major facilitator superfamily multidrug transporter FLU1 (610 aa).

Residues asparagine 3 and asparagine 21 are each glycosylated (N-linked (GlcNAc...) asparagine). The span at 47-58 shows a compositional bias: polar residues; it reads GPTDSVESSSNT. Residues 47-74 are disordered; the sequence is GPTDSVESSSNTADEENEINSFNAQNVK. The next 11 helical transmembrane spans lie at 165-185, 209-229, 231-251, 262-282, 292-312, 323-343, 408-428, 437-457, 478-498, 507-527, and 530-550; these read ILYC…SAMF, LFVF…ELFG, KLVM…VATA, FFAG…MADM, IAIF…LGAF, WTSY…TFLL, AFIY…FLGE, ELPY…IMLF, LEPM…LGWT, WIVP…IFLP, and NYII…NTFI. N-linked (GlcNAc...) asparagine glycosylation is present at asparagine 568. The chain crosses the membrane as a helical span at residues 573-593; it reads WASTLLGCIGILLLPMPFVFY.

This sequence belongs to the major facilitator superfamily. DHA1 family. Polyamines/proton antiporter (TC 2.A.1.2.16) subfamily.

Its subcellular location is the cell membrane. In terms of biological role, major facilitator superfamily transporter that mediates resistance to structurally and functionally unrelated compounds including cycloheximide but also azoles such as fuconazole, ketoconazole and itraconazole. Also mediates efflux of histatin 5, a salivary human antimicrobial peptide, and is responsible for reduction of its toxicity in C.albicans. This is Major facilitator superfamily multidrug transporter FLU1 from Candida albicans (strain SC5314 / ATCC MYA-2876) (Yeast).